Here is an 872-residue protein sequence, read N- to C-terminus: uncharacterized protein (872 aa).

Residues 496–524 (LQQHHQDISAMQQQILEEKNQLRRATIDV) are a coiled coil. Disordered regions lie at residues 595–736 (RPAV…SVQQ) and 844–872 (TKEN…PQAV). 2 stretches are compositionally biased toward polar residues: residues 615–659 (QNGN…QTTF) and 670–686 (PYAS…NNVV). Residues 687–736 (QQYQSYYDNPSNQQSNQQSNQQSNQQPNQQPNQQPNQQPNQQPNQQSVQQ) show a composition bias toward low complexity.

The protein localises to the virion. This is an uncharacterized protein from Acanthamoeba polyphaga mimivirus (APMV).